Reading from the N-terminus, the 501-residue chain is ATP synthase subunit alpha (501 aa).

169-176 (GDRQTGKT) provides a ligand contact to ATP.

This sequence belongs to the ATPase alpha/beta chains family. F-type ATPases have 2 components, CF(1) - the catalytic core - and CF(0) - the membrane proton channel. CF(1) has five subunits: alpha(3), beta(3), gamma(1), delta(1), epsilon(1). CF(0) has three main subunits: a(1), b(2) and c(9-12). The alpha and beta chains form an alternating ring which encloses part of the gamma chain. CF(1) is attached to CF(0) by a central stalk formed by the gamma and epsilon chains, while a peripheral stalk is formed by the delta and b chains.

The protein resides in the cell inner membrane. It catalyses the reaction ATP + H2O + 4 H(+)(in) = ADP + phosphate + 5 H(+)(out). Its function is as follows. Produces ATP from ADP in the presence of a proton gradient across the membrane. The alpha chain is a regulatory subunit. This is ATP synthase subunit alpha from Campylobacter jejuni subsp. jejuni serotype O:6 (strain 81116 / NCTC 11828).